Here is a 213-residue protein sequence, read N- to C-terminus: Superoxide dismutase [Fe] (213 aa).

H26, H73, D156, and H160 together coordinate Fe cation.

This sequence belongs to the iron/manganese superoxide dismutase family. In terms of assembly, homodimer. Fe cation is required as a cofactor.

The catalysed reaction is 2 superoxide + 2 H(+) = H2O2 + O2. Functionally, destroys superoxide anion radicals which are normally produced within the cells and which are toxic to biological systems. The protein is Superoxide dismutase [Fe] (sodB) of Helicobacter pylori (strain ATCC 700392 / 26695) (Campylobacter pylori).